The sequence spans 97 residues: Co-chaperonin GroES (97 aa).

This sequence belongs to the GroES chaperonin family. Heptamer of 7 subunits arranged in a ring. Interacts with the chaperonin GroEL.

It is found in the cytoplasm. Together with the chaperonin GroEL, plays an essential role in assisting protein folding. The GroEL-GroES system forms a nano-cage that allows encapsulation of the non-native substrate proteins and provides a physical environment optimized to promote and accelerate protein folding. GroES binds to the apical surface of the GroEL ring, thereby capping the opening of the GroEL channel. This is Co-chaperonin GroES from Salmonella agona (strain SL483).